A 1357-amino-acid chain; its full sequence is DNA-directed RNA polymerase subunit beta (1357 aa).

This sequence belongs to the RNA polymerase beta chain family. In terms of assembly, the RNAP catalytic core consists of 2 alpha, 1 beta, 1 beta' and 1 omega subunit. When a sigma factor is associated with the core the holoenzyme is formed, which can initiate transcription.

It carries out the reaction RNA(n) + a ribonucleoside 5'-triphosphate = RNA(n+1) + diphosphate. Functionally, DNA-dependent RNA polymerase catalyzes the transcription of DNA into RNA using the four ribonucleoside triphosphates as substrates. This is DNA-directed RNA polymerase subunit beta from Hahella chejuensis (strain KCTC 2396).